The sequence spans 86 residues: Co-chaperonin GroES (86 aa).

The protein belongs to the GroES chaperonin family. As to quaternary structure, heptamer of 7 subunits arranged in a ring. Interacts with the chaperonin GroEL.

It is found in the cytoplasm. In terms of biological role, together with the chaperonin GroEL, plays an essential role in assisting protein folding. The GroEL-GroES system forms a nano-cage that allows encapsulation of the non-native substrate proteins and provides a physical environment optimized to promote and accelerate protein folding. GroES binds to the apical surface of the GroEL ring, thereby capping the opening of the GroEL channel. The sequence is that of Co-chaperonin GroES from Campylobacter curvus (strain 525.92).